The sequence spans 580 residues: Mitogen-activated protein kinase 12 (580 aa).

The disordered stretch occupies residues 18–38 (RTASGSNQSSNAGEEAASSDL). Positions 20-29 (ASGSNQSSNA) are enriched in polar residues. The region spanning 87 to 378 (YQIQEVIGKG…AEEALADPYF (292 aa)) is the Protein kinase domain. ATP is bound by residues 93–101 (IGKGSYGVV) and Lys-116. Asp-213 functions as the Proton acceptor in the catalytic mechanism. Residue Thr-249 is modified to Phosphothreonine. A TXY motif is present at residues 249–251 (TDY). The residue at position 251 (Tyr-251) is a Phosphotyrosine. The interval 325 to 506 (ARRYLSTMRK…SADSVARTTV (182 aa)) is required for kinase activity and nuclear localization. The segment at 458–580 (YSKGERGSPL…LSEQVSRMHS (123 aa)) is disordered. Over residues 502–543 (ARTTVSPPMSQDAQQHGSAGQNGVTSTDLSSRSYLKSASISA) the composition is skewed to polar residues. Residues 554–566 (EPEDDYISEEMEG) are compositionally biased toward acidic residues.

Belongs to the protein kinase superfamily. CMGC Ser/Thr protein kinase family. MAP kinase subfamily. Interacts with EREBP1. Post-translationally, dually phosphorylated on Thr-249 and Tyr-251, which activates the enzyme. Phosphorylated on tyrosine residue.

Its subcellular location is the cytoplasm. The protein localises to the nucleus. It carries out the reaction L-seryl-[protein] + ATP = O-phospho-L-seryl-[protein] + ADP + H(+). It catalyses the reaction L-threonyl-[protein] + ATP = O-phospho-L-threonyl-[protein] + ADP + H(+). Its activity is regulated as follows. Activated by threonine and tyrosine phosphorylation. Activated in response to hydrogen peroxide, salicylic acid, jasmonic acid, ethylene, fungal elicitor and infection with rice blast fungus (M.grisea). Its function is as follows. May be involved in defense signaling pathway. Phosphorylates EREBP1 transcriptional activator in vitro. Enhances DNA-binding activity of EREBP1 to the GCC box element of pathogenesis-related (PR) gene promoters. This is Mitogen-activated protein kinase 12 (MPK12) from Oryza sativa subsp. japonica (Rice).